The following is a 95-amino-acid chain: Small ribosomal subunit protein bS6 (95 aa).

This sequence belongs to the bacterial ribosomal protein bS6 family.

Binds together with bS18 to 16S ribosomal RNA. This chain is Small ribosomal subunit protein bS6, found in Bacillus pumilus (strain SAFR-032).